The primary structure comprises 330 residues: GTPase Obg (330 aa).

The Obg domain maps to 1–159; that stretch reads MHFIDEVKIY…MWIHLSLKLL (159 aa). In terms of domain architecture, OBG-type G spans 160-327; that stretch reads SDVGLVGLPN…IVKLALETIK (168 aa). Residues 166–173, 191–195, 212–215, 279–282, and 308–310 contribute to the GTP site; these read GLPNAGKS, FTTLV, DIPG, NKCD, and STC. 2 residues coordinate Mg(2+): Ser-173 and Thr-193.

Belongs to the TRAFAC class OBG-HflX-like GTPase superfamily. OBG GTPase family. In terms of assembly, monomer. The cofactor is Mg(2+).

The protein resides in the cytoplasm. In terms of biological role, an essential GTPase which binds GTP, GDP and possibly (p)ppGpp with moderate affinity, with high nucleotide exchange rates and a fairly low GTP hydrolysis rate. Plays a role in control of the cell cycle, stress response, ribosome biogenesis and in those bacteria that undergo differentiation, in morphogenesis control. The sequence is that of GTPase Obg from Rickettsia rickettsii (strain Iowa).